The chain runs to 203 residues: Translation initiation factor IF-3 (203 aa).

The span at 172–182 shows a compositional bias: basic and acidic residues; sequence EAPKNEKKTKE. Residues 172–203 form a disordered region; it reads EAPKNEKKTKENNPPFNRINLMKGENHAKNED.

This sequence belongs to the IF-3 family. In terms of assembly, monomer.

Its subcellular location is the cytoplasm. In terms of biological role, IF-3 binds to the 30S ribosomal subunit and shifts the equilibrium between 70S ribosomes and their 50S and 30S subunits in favor of the free subunits, thus enhancing the availability of 30S subunits on which protein synthesis initiation begins. This is Translation initiation factor IF-3 from Helicobacter pylori (strain ATCC 700392 / 26695) (Campylobacter pylori).